The primary structure comprises 531 residues: Calcium-dependent protein kinase 21 (531 aa).

Basic residues predominate over residues 1–10 (MGCFSSKHRK). The disordered stretch occupies residues 1 to 62 (MGCFSSKHRK…STPSSNPVSV (62 aa)). Gly2 carries N-myristoyl glycine lipidation. A compositionally biased stretch (polar residues) spans 48-60 (IHQQISTPSSNPV). Residues 80–338 (YSLGKELGRG…AAQVLEHPWI (259 aa)) form the Protein kinase domain. Residues 86–94 (LGRGQFGIT) and Lys109 contribute to the ATP site. Catalysis depends on Asp204, which acts as the Proton acceptor. Ser244 is subject to Phosphoserine. An autoinhibitory domain region spans residues 343–373 (APDKPIDSAVLSRMKQFRAMNKLKKLALKVI). EF-hand domains lie at 380 to 415 (EEIKGLKTMFANIDTDKSGTITYEELKTGLTRLGSR), 416 to 451 (LSETEVKQLMEAADVDGNGTIDYYEFISATMHRYKL), 452 to 487 (DRDEHVYKAFQHFDKDNSGHITRDELESAMKEYGMG), and 488 to 522 (DEASIKEVISEVDTDNDGRINFEEFCAMMRSGSTQ). Positions 393, 395, 397, 399, 404, 429, 431, 433, 435, 440, 465, 467, 469, 471, 476, 500, 502, 504, 506, and 511 each coordinate Ca(2+).

This sequence belongs to the protein kinase superfamily. Ser/Thr protein kinase family. CDPK subfamily. In terms of assembly, interacts with SLAC1 and ABI1.

It is found in the cell membrane. The catalysed reaction is L-seryl-[protein] + ATP = O-phospho-L-seryl-[protein] + ADP + H(+). The enzyme catalyses L-threonyl-[protein] + ATP = O-phospho-L-threonyl-[protein] + ADP + H(+). Its activity is regulated as follows. Activated by calcium. Autophosphorylation may play an important role in the regulation of the kinase activity. In terms of biological role, may play a role in signal transduction pathways that involve calcium as a second messenger. Mediates the phosphorylation and activation of the S-type anion efflux channel SLAC1. This is Calcium-dependent protein kinase 21 (CPK21) from Arabidopsis thaliana (Mouse-ear cress).